The following is a 1149-amino-acid chain: DNA-directed RNA polymerase III subunit RPC2 (1149 aa).

Positions 1095, 1098, 1107, and 1110 each coordinate Zn(2+). The segment at 1095-1110 (CDKCGLMGYSGWCTTC) adopts a C4-type zinc-finger fold.

This sequence belongs to the RNA polymerase beta chain family. Component of the RNA polymerase III (Pol III) complex consisting of 17 subunits.

It localises to the nucleus. The catalysed reaction is RNA(n) + a ribonucleoside 5'-triphosphate = RNA(n+1) + diphosphate. Functionally, DNA-dependent RNA polymerase catalyzes the transcription of DNA into RNA using the four ribonucleoside triphosphates as substrates. Second largest core component of RNA polymerase III which synthesizes small RNAs, such as 5S rRNA and tRNAs. Proposed to contribute to the polymerase catalytic activity and forms the polymerase active center together with the largest subunit. Pol III is composed of mobile elements and RPC2 is part of the core element with the central large cleft and probably a clamp element that moves to open and close the cleft. This is DNA-directed RNA polymerase III subunit RPC2 (RET1) from Saccharomyces cerevisiae (strain ATCC 204508 / S288c) (Baker's yeast).